The primary structure comprises 215 residues: Myelin protein zero-like protein 2 (215 aa).

The signal sequence occupies residues 1 to 26 (MYGKSSTRAVLLLLGIQLTALWPIAA). Residues 27 to 141 (VEIYTSRVLE…DGVIGEIRLS (115 aa)) form the Ig-like V-type domain. Topologically, residues 27-154 (VEIYTSRVLE…TVRFSEIHFL (128 aa)) are extracellular. Asparagine 39 and asparagine 118 each carry an N-linked (GlcNAc...) asparagine glycan. A disulfide bond links cysteine 47 and cysteine 123. Residues 155-175 (ALAIGSACALMIIIVIVVVLF) form a helical membrane-spanning segment. Over 176 to 215 (QHYRKKRWAERAHKVVEIKSKEEERLNQEKKVSVYLEDTD) the chain is Cytoplasmic.

The protein belongs to the myelin P0 protein family. Widely expressed. In fetal tissues, highest expression in the inner ear. In adult tissues, highest levels in thymus and lung.

The protein localises to the membrane. In terms of biological role, mediates homophilic cell-cell adhesion. This chain is Myelin protein zero-like protein 2 (MPZL2), found in Homo sapiens (Human).